A 387-amino-acid chain; its full sequence is Chorismate synthase (387 aa).

Arginine 40 and arginine 46 together coordinate NADP(+). Residues 129 to 131 (RSS), 250 to 251 (QA), glycine 295, 310 to 314 (KPIPT), and arginine 336 contribute to the FMN site.

The protein belongs to the chorismate synthase family. Homotetramer. The cofactor is FMNH2.

It catalyses the reaction 5-O-(1-carboxyvinyl)-3-phosphoshikimate = chorismate + phosphate. The protein operates within metabolic intermediate biosynthesis; chorismate biosynthesis; chorismate from D-erythrose 4-phosphate and phosphoenolpyruvate: step 7/7. Catalyzes the anti-1,4-elimination of the C-3 phosphate and the C-6 proR hydrogen from 5-enolpyruvylshikimate-3-phosphate (EPSP) to yield chorismate, which is the branch point compound that serves as the starting substrate for the three terminal pathways of aromatic amino acid biosynthesis. This reaction introduces a second double bond into the aromatic ring system. The polypeptide is Chorismate synthase (Desulforamulus reducens (strain ATCC BAA-1160 / DSM 100696 / MI-1) (Desulfotomaculum reducens)).